The primary structure comprises 223 residues: Serine/threonine/tyrosine-interacting protein (223 aa).

A Tyrosine-protein phosphatase domain is found at 28-176; it reads EMQEVLPGLF…LQEYEAIYLA (149 aa). The short motif at 76 to 78 is the Interaction with FBXW7 element; the sequence is FQQ. Ser-184 and Ser-201 each carry phosphoserine. The tract at residues 199–223 is disordered; the sequence is TGSVKRTHEEDDDFGNMQVATAQNG.

This sequence belongs to the protein-tyrosine phosphatase family. Non-receptor class subfamily. As to quaternary structure, interacts with MAPK1; independently of MAPK1 phosphorylation status. Interacts with CARHSP1/Crhsp-24. Interacts (via FQQ motif) with FBXW7 (via F-box domain); the interaction is direct and prevents FBXW7 interaction with SKP1, a component of the SCF(FBXW7) complex. In terms of tissue distribution, widely expressed with highest levels in muscle, testis and brain. In testis, expression starts 13-14 days after birth and is limited to the seminiferous tubule and to round and elongating spermatids. Expression is low in condensing spermatids and pachytene spermatocytes, and absent in spermatogonia, spermatozoa and somatic Sertoli cells.

It localises to the nucleus. The protein resides in the cytoplasm. It is found in the cytosol. Catalytically inactive phosphatase. Acts as a nuclear anchor for MAPK1/MAPK3 (ERK1/ERK2). Modulates cell-fate decisions and cell migration by spatiotemporal regulation of MAPK1/MAPK3 (ERK1/ERK2). By binding to the F-box of FBXW7, prevents the assembly of FBXW7 into the SCF E3 ubiquitin-protein ligase complex, and thereby inhibits degradation of its substrates. Plays a role in spermatogenesis. The protein is Serine/threonine/tyrosine-interacting protein of Mus musculus (Mouse).